A 620-amino-acid polypeptide reads, in one-letter code: DNA mismatch repair protein MutL (620 aa).

The disordered stretch occupies residues 332–402 (SELGLEAQPE…YRTPLRPATH (71 aa)). The segment covering 352-365 (SNSTNSNVSSTSYS) has biased composition (low complexity). Over residues 378-394 (PLTTTATSYNQGQSSYR) the composition is skewed to polar residues.

This sequence belongs to the DNA mismatch repair MutL/HexB family.

Functionally, this protein is involved in the repair of mismatches in DNA. It is required for dam-dependent methyl-directed DNA mismatch repair. May act as a 'molecular matchmaker', a protein that promotes the formation of a stable complex between two or more DNA-binding proteins in an ATP-dependent manner without itself being part of a final effector complex. This chain is DNA mismatch repair protein MutL, found in Shewanella piezotolerans (strain WP3 / JCM 13877).